Here is a 392-residue protein sequence, read N- to C-terminus: O-phospho-L-seryl-tRNA:Cys-tRNA synthase 1 (392 aa).

Pyridoxal 5'-phosphate is bound by residues 85 to 86 (AR), Asn-190, and 213 to 215 (SGH). At Lys-216 the chain carries N6-(pyridoxal phosphate)lysine.

Belongs to the SepCysS family. Homodimer. Interacts with SepRS. It depends on pyridoxal 5'-phosphate as a cofactor.

The catalysed reaction is O-phospho-L-seryl-tRNA(Cys) + hydrogen sulfide + H(+) = L-cysteinyl-tRNA(Cys) + phosphate. Its function is as follows. Converts O-phospho-L-seryl-tRNA(Cys) (Sep-tRNA(Cys)) to L-cysteinyl-tRNA(Cys) (Cys-tRNA(Cys)). In Methanoregula boonei (strain DSM 21154 / JCM 14090 / 6A8), this protein is O-phospho-L-seryl-tRNA:Cys-tRNA synthase 1.